The sequence spans 430 residues: Adenylosuccinate synthetase (430 aa).

GTP contacts are provided by residues 12–18 (GDEGKGK) and 40–42 (GHT). Aspartate 13 acts as the Proton acceptor in catalysis. 2 residues coordinate Mg(2+): aspartate 13 and glycine 40. Residues 13-16 (DEGK), 38-41 (NAGH), threonine 128, arginine 142, glutamine 223, threonine 238, and arginine 302 each bind IMP. Residue histidine 41 is the Proton donor of the active site. 298 to 304 (TTTGRPR) serves as a coordination point for substrate. Residues arginine 304, 330-332 (LLD), and 412-414 (SVG) contribute to the GTP site.

This sequence belongs to the adenylosuccinate synthetase family. Homodimer. Mg(2+) is required as a cofactor.

Its subcellular location is the cytoplasm. It catalyses the reaction IMP + L-aspartate + GTP = N(6)-(1,2-dicarboxyethyl)-AMP + GDP + phosphate + 2 H(+). Its pathway is purine metabolism; AMP biosynthesis via de novo pathway; AMP from IMP: step 1/2. In terms of biological role, plays an important role in the de novo pathway of purine nucleotide biosynthesis. Catalyzes the first committed step in the biosynthesis of AMP from IMP. The polypeptide is Adenylosuccinate synthetase (Listeria innocua serovar 6a (strain ATCC BAA-680 / CLIP 11262)).